A 112-amino-acid chain; its full sequence is Na(+)/H(+) antiporter subunit C (112 aa).

Helical transmembrane passes span 4-21 (LMSI…YLIL), 28-50 (VVVG…AGLQ), and 70-92 (QALI…VLAY).

The protein belongs to the CPA3 antiporters (TC 2.A.63) subunit C family. Forms a heterooligomeric complex that consists of seven subunits: MrpA, MrpB, MrpC, MrpD, MrpE, MrpF and MrpG.

It is found in the cell membrane. Mnh complex is a Na(+)Li(+)/H(+) antiporter involved in Na(+) and/or Li(+) excretion and Na(+) resistance. Na(+)/H(+) antiport consumes a transmembrane electrical potential, and is thus inferred to be electrogenic. Does not transport K(+), Ca(2+) or Mg(2+). The sequence is that of Na(+)/H(+) antiporter subunit C (mrpC) from Alkalihalophilus pseudofirmus (strain ATCC BAA-2126 / JCM 17055 / OF4) (Bacillus pseudofirmus).